Consider the following 39-residue polypeptide: Photosystem II reaction center protein J (39 aa).

The helical transmembrane segment at 7–27 (IPLWIVATVAGTGVLVVVGLF) threads the bilayer.

It belongs to the PsbJ family. As to quaternary structure, PSII is composed of 1 copy each of membrane proteins PsbA, PsbB, PsbC, PsbD, PsbE, PsbF, PsbH, PsbI, PsbJ, PsbK, PsbL, PsbM, PsbT, PsbX, PsbY, PsbZ, Psb30/Ycf12, peripheral proteins PsbO, CyanoQ (PsbQ), PsbU, PsbV and a large number of cofactors. It forms dimeric complexes.

It is found in the cellular thylakoid membrane. Its function is as follows. One of the components of the core complex of photosystem II (PSII). PSII is a light-driven water:plastoquinone oxidoreductase that uses light energy to abstract electrons from H(2)O, generating O(2) and a proton gradient subsequently used for ATP formation. It consists of a core antenna complex that captures photons, and an electron transfer chain that converts photonic excitation into a charge separation. In Synechococcus elongatus (strain ATCC 33912 / PCC 7942 / FACHB-805) (Anacystis nidulans R2), this protein is Photosystem II reaction center protein J.